The following is a 322-amino-acid chain: Succinate/fumarate mitochondrial transporter (322 aa).

3 Solcar repeats span residues 8-99 (SHPA…YRTL), 111-202 (GNTF…LKEF), and 212-303 (LPSW…VREH). The next 6 helical transmembrane spans lie at 11–31 (AINLMAGGTAGLFEALCCHPL), 68–88 (FLALYKGLGAVVIGIIPKMAI), 114–134 (FVAGVGAGITEAVLVVNPMEV), 177–193 (GVSLTAARQATNQGANF), 219–235 (CIGLISGAIGPFSNAPL), and 278–295 (GITPRVMRVAPGQAVTFT).

The protein belongs to the mitochondrial carrier (TC 2.A.29) family.

The protein resides in the mitochondrion inner membrane. In terms of biological role, transports cytoplasmic succinate, derived from isocitrate by the action of isocitrate lyase in the cytosol, into the mitochondrial matrix in exchange for fumarate. In Saccharomyces cerevisiae (strain ATCC 204508 / S288c) (Baker's yeast), this protein is Succinate/fumarate mitochondrial transporter (SFC1).